A 173-amino-acid chain; its full sequence is Cell division protein SepF (173 aa).

The interval phenylalanine 31–leucine 82 is disordered. Basic and acidic residues-rich tracts occupy residues aspartate 39–arginine 53 and serine 60–serine 72.

The protein belongs to the SepF family. As to quaternary structure, homodimer. Interacts with FtsZ.

The protein localises to the cytoplasm. Its function is as follows. Cell division protein that is part of the divisome complex and is recruited early to the Z-ring. Probably stimulates Z-ring formation, perhaps through the cross-linking of FtsZ protofilaments. Its function overlaps with FtsA. This chain is Cell division protein SepF, found in Thermobifida fusca (strain YX).